Here is a 133-residue protein sequence, read N- to C-terminus: Norrin (133 aa).

Positions 1 to 24 (MRKHVLAASFSMLSLLVIMGDTDS) are cleaved as a signal peptide. Intrachain disulfides connect C39/C96, C55/C110, C65/C126, and C69/C128. Residues 39–132 (CMRHHYVDSI…ILSCHCEECN (94 aa)) enclose the CTCK domain.

Homodimer; disulfide-linked. Component of a complex, at least composed of TSPAN12, FZD4, LRP5/6 and norrin (NDP). Binds FZD4 with high affinity. Interacts with LRP6 (via Beta-propellers 1 and 2). In terms of tissue distribution, expressed in the outer nuclear, inner nuclear and ganglion cell layers of the retina, and in fetal and adult brain.

The protein localises to the secreted. Its function is as follows. Activates the canonical Wnt signaling pathway through FZD4 and LRP5 coreceptor. Plays a central role in retinal vascularization by acting as a ligand for FZD4 that signals via stabilizing beta-catenin (CTNNB1) and activating LEF/TCF-mediated transcriptional programs. Acts in concert with TSPAN12 to activate FZD4 independently of the Wnt-dependent activation of FZD4, suggesting the existence of a Wnt-independent signaling that also promote accumulation the beta-catenin (CTNNB1). May be involved in a pathway that regulates neural cell differentiation and proliferation. Possible role in neuroectodermal cell-cell interaction. The sequence is that of Norrin (NDP) from Homo sapiens (Human).